The following is a 465-amino-acid chain: MAYKPTQTLRKLAEKSSLDIVSREFADYMDSKDPLRKMRDEFFYPRVKDLPGVDLSLVDGDQDSIYFCGNSLGLQPRGCRELIDRSLTKWEQMGVLGHTSGWCPWKPIEDILIKPMAEIIGAKDIEVVAMNTLTVNLHMMMVPFYRPTPQRYKILMEGKAFPSDQYAAQSQVHFHGFDPDKDIIEVFPREGEQSLRTEDILSAIEEHGNSITLVLFSGVQYYTGQFFDMKTITAAAQKKGCVVGWDLAHAVGNVELHLHDWNVDFACWCTYKYLNSGPGGIAGAFVHEKHAYNFELPKFAGWWGTDRNSRFQMRKEFEQIPGAHGYQCSNPPVFQCLLLRASLDVFEKTSVKEIRAKGDLLTAYLELLLLHYFSPSNDITKNGNTPHVSIITPADPKDRGCQLSVKFSVPVDKVFEELCKRGFVGDIRHPDVMRIAPAPLYNSFADVHRFISMLNAAFKTITPNS.

Pyridoxal 5'-phosphate-binding positions include Leu-133, Thr-134, 161–164 (FPSD), Ser-217, Asp-246, His-249, and Tyr-271. Lys-272 carries the post-translational modification N6-(pyridoxal phosphate)lysine. Residues Trp-302 and Asn-330 each coordinate pyridoxal 5'-phosphate.

It belongs to the kynureninase family. As to quaternary structure, homodimer. Pyridoxal 5'-phosphate is required as a cofactor.

It localises to the cytoplasm. The enzyme catalyses L-kynurenine + H2O = anthranilate + L-alanine + H(+). The catalysed reaction is 3-hydroxy-L-kynurenine + H2O = 3-hydroxyanthranilate + L-alanine + H(+). It functions in the pathway amino-acid degradation; L-kynurenine degradation; L-alanine and anthranilate from L-kynurenine: step 1/1. Its pathway is cofactor biosynthesis; NAD(+) biosynthesis; quinolinate from L-kynurenine: step 2/3. Its function is as follows. Catalyzes the cleavage of L-kynurenine (L-Kyn) and L-3-hydroxykynurenine (L-3OHKyn) into anthranilic acid (AA) and 3-hydroxyanthranilic acid (3-OHAA), respectively. This Nematostella vectensis (Starlet sea anemone) protein is Kynureninase.